Consider the following 216-residue polypeptide: Peptide deformylase 1 (216 aa).

Residues Cys135 and His177 each coordinate Fe cation. The active site involves Glu178. His181 is a binding site for Fe cation.

Belongs to the polypeptide deformylase family. Fe(2+) serves as cofactor.

It catalyses the reaction N-terminal N-formyl-L-methionyl-[peptide] + H2O = N-terminal L-methionyl-[peptide] + formate. Its function is as follows. Removes the formyl group from the N-terminal Met of newly synthesized proteins. Requires at least a dipeptide for an efficient rate of reaction. N-terminal L-methionine is a prerequisite for activity but the enzyme has broad specificity at other positions. In Streptomyces avermitilis (strain ATCC 31267 / DSM 46492 / JCM 5070 / NBRC 14893 / NCIMB 12804 / NRRL 8165 / MA-4680), this protein is Peptide deformylase 1.